Reading from the N-terminus, the 490-residue chain is Homoserine O-acetyltransferase (490 aa).

The 307-residue stretch at 48-354 (NVILVCHALT…NSEYGHDAFL (307 aa)) folds into the AB hydrolase-1 domain. The active-site Nucleophile is the Ser153. Arg223 provides a ligand contact to substrate. Catalysis depends on residues Asp317 and His350. A substrate-binding site is contributed by Asp351. 2 CBS domains span residues 377–434 (MSHT…ANSI) and 438–490 (MTKN…LYEK).

The protein belongs to the AB hydrolase superfamily. MetX family. Homodimer.

It is found in the cytoplasm. The enzyme catalyses L-homoserine + acetyl-CoA = O-acetyl-L-homoserine + CoA. The protein operates within amino-acid biosynthesis; L-methionine biosynthesis via de novo pathway; O-acetyl-L-homoserine from L-homoserine: step 1/1. In terms of biological role, transfers an acetyl group from acetyl-CoA to L-homoserine, forming acetyl-L-homoserine. This is Homoserine O-acetyltransferase from Methanosphaera stadtmanae (strain ATCC 43021 / DSM 3091 / JCM 11832 / MCB-3).